The sequence spans 299 residues: Acetylglutamate kinase (299 aa).

Substrate-binding positions include 70–71 (GG), arginine 92, and asparagine 186.

The protein belongs to the acetylglutamate kinase family. ArgB subfamily.

It localises to the cytoplasm. It catalyses the reaction N-acetyl-L-glutamate + ATP = N-acetyl-L-glutamyl 5-phosphate + ADP. Its pathway is amino-acid biosynthesis; L-arginine biosynthesis; N(2)-acetyl-L-ornithine from L-glutamate: step 2/4. In terms of biological role, catalyzes the ATP-dependent phosphorylation of N-acetyl-L-glutamate. This Petrotoga mobilis (strain DSM 10674 / SJ95) protein is Acetylglutamate kinase.